The chain runs to 410 residues: MRNLLENIKKNSQKLLNLTPKDKEKIILKLAQILRENFKIILEANKKDMANFTKSGAMKDRLLLDEKRILALCEGLEKIAYIEDPIGKISKGWKNYAGLSIQKMSIPLGLICVIYEARPSLSAEIAALMIKSSNACVFKGGSEAKFTNEAIFTLVNKVLKEFDLQDCFAMFTQRDEILQILAFDDLIDVIIPRGSSNMIQEIANNTKIPLIKQNKGLCHAFVDQSANLDMALKIILNAKCQRVSVCNALETLLIHEKIAKNFISLLIPEFKKFKVKIHAHENALAYFNNSNLKIFKANENTFDTEWLDFALSVKLVKDCDEAIEHINKHSSLHSETIISNDASNIAKFQRLINSSCIYANASTRFSDGGEFGFGGEVGISTSKLHARGPMGIEDICTYKYIINGEGQIRE.

The protein belongs to the gamma-glutamyl phosphate reductase family.

The protein resides in the cytoplasm. The catalysed reaction is L-glutamate 5-semialdehyde + phosphate + NADP(+) = L-glutamyl 5-phosphate + NADPH + H(+). The protein operates within amino-acid biosynthesis; L-proline biosynthesis; L-glutamate 5-semialdehyde from L-glutamate: step 2/2. Catalyzes the NADPH-dependent reduction of L-glutamate 5-phosphate into L-glutamate 5-semialdehyde and phosphate. The product spontaneously undergoes cyclization to form 1-pyrroline-5-carboxylate. This is Gamma-glutamyl phosphate reductase from Campylobacter jejuni subsp. jejuni serotype O:23/36 (strain 81-176).